Reading from the N-terminus, the 149-residue chain is Ribonuclease H (149 aa).

Residues 5-146 enclose the RNase H type-1 domain; it reads QRPHVVIFTD…ADELAREGLA (142 aa). Mg(2+)-binding residues include aspartate 14, glutamate 52, aspartate 74, and aspartate 138.

It belongs to the RNase H family. As to quaternary structure, monomer. Requires Mg(2+) as cofactor.

The protein localises to the cytoplasm. It catalyses the reaction Endonucleolytic cleavage to 5'-phosphomonoester.. Endonuclease that specifically degrades the RNA of RNA-DNA hybrids. This chain is Ribonuclease H, found in Afipia carboxidovorans (strain ATCC 49405 / DSM 1227 / KCTC 32145 / OM5) (Oligotropha carboxidovorans).